The sequence spans 695 residues: Phenoloxidase subunit 2 (695 aa).

Residues H215, H219, and H245 each contribute to the Cu cation site. The active-site Proton acceptor is E353. Cu cation is bound by residues H368, H372, and H408. Disulfide bonds link C586–C630 and C588–C637.

As to quaternary structure, heterodimer. Forms a complex with an interleukin 1-like protein as a consequence of a host defense response. Cu(2+) is required as a cofactor. In terms of processing, the N-terminus is blocked. In terms of tissue distribution, synthesized by oenocytoids, a type of hemocyte, and released into the hemolymph plasma.

The protein localises to the secreted. The enzyme catalyses 2 L-dopa + O2 = 2 L-dopaquinone + 2 H2O. It carries out the reaction L-tyrosine + O2 = L-dopaquinone + H2O. Its activity is regulated as follows. Activated by immulectin and lipopolysaccharide. In terms of biological role, this is a copper-containing oxidase that functions in the formation of pigments such as melanins and other polyphenolic compounds. Catalyzes the rate-limiting conversions of tyrosine to DOPA, DOPA to DOPA-quinone and possibly 5,6 dihydroxyindole to indole-5'6 quinone. Binds to the surface of hemocytes and is involved in hemocyte melanization. This chain is Phenoloxidase subunit 2, found in Manduca sexta (Tobacco hawkmoth).